The following is a 509-amino-acid chain: ATP synthase subunit alpha (509 aa).

Residue Gly169–Thr176 coordinates ATP.

The protein belongs to the ATPase alpha/beta chains family. F-type ATPases have 2 components, CF(1) - the catalytic core - and CF(0) - the membrane proton channel. CF(1) has five subunits: alpha(3), beta(3), gamma(1), delta(1), epsilon(1). CF(0) has three main subunits: a(1), b(2) and c(9-12). The alpha and beta chains form an alternating ring which encloses part of the gamma chain. CF(1) is attached to CF(0) by a central stalk formed by the gamma and epsilon chains, while a peripheral stalk is formed by the delta and b chains.

Its subcellular location is the cell inner membrane. It catalyses the reaction ATP + H2O + 4 H(+)(in) = ADP + phosphate + 5 H(+)(out). Its function is as follows. Produces ATP from ADP in the presence of a proton gradient across the membrane. The alpha chain is a regulatory subunit. In Rhizobium leguminosarum bv. trifolii (strain WSM2304), this protein is ATP synthase subunit alpha.